A 1108-amino-acid chain; its full sequence is Ubiquitin carboxyl-terminal hydrolase 5 (1108 aa).

The MATH domain occupies F55–V187. Catalysis depends on nucleophile residues C120 and C222. The USP domain occupies V213–K528. H464 acts as the Proton acceptor in catalysis.

It belongs to the peptidase C19 family.

It localises to the nucleus. The catalysed reaction is Thiol-dependent hydrolysis of ester, thioester, amide, peptide and isopeptide bonds formed by the C-terminal Gly of ubiquitin (a 76-residue protein attached to proteins as an intracellular targeting signal).. Its function is as follows. Hydrolase that deubiquitinates target proteins. Cleaves the UBL propeptide in sde2. The polypeptide is Ubiquitin carboxyl-terminal hydrolase 5 (ubp5) (Schizosaccharomyces pombe (strain 972 / ATCC 24843) (Fission yeast)).